Reading from the N-terminus, the 317-residue chain is Transcription cofactor vestigial-like protein 2 (317 aa).

4 disordered regions span residues 41 to 76 (CNASPSSSGSGSSSFSSQTPASIKEEEGSPEKERPP), 108 to 128 (SQPSSYSPSCTSSKAPRSSGP), 191 to 214 (TEPWHHAHPHHAHPHHPYALGGAL), and 253 to 293 (RLAT…PSGD). The span at 44–57 (SPSSSGSGSSSFSS) shows a compositional bias: low complexity. Basic and acidic residues predominate over residues 63–76 (IKEEEGSPEKERPP). Positions 108–120 (SQPSSYSPSCTSS) are enriched in low complexity. Over residues 196–206 (HAHPHHAHPHH) the composition is skewed to basic residues. Residues 272 to 292 (KGEPAGAAWAGPGGPFASPSG) are compositionally biased toward low complexity.

It belongs to the vestigial family. In terms of assembly, interacts with TEFs. Binds to TEAD1/TEF1. In terms of tissue distribution, skeletal muscle.

It localises to the nucleus. May act as a specific coactivator for the mammalian TEFs. May play a role in the development of skeletal muscles. The protein is Transcription cofactor vestigial-like protein 2 (VGLL2) of Homo sapiens (Human).